The primary structure comprises 250 residues: 5-oxoprolinase subunit A (250 aa).

The protein belongs to the LamB/PxpA family. Forms a complex composed of PxpA, PxpB and PxpC.

It carries out the reaction 5-oxo-L-proline + ATP + 2 H2O = L-glutamate + ADP + phosphate + H(+). Functionally, catalyzes the cleavage of 5-oxoproline to form L-glutamate coupled to the hydrolysis of ATP to ADP and inorganic phosphate. The protein is 5-oxoprolinase subunit A of Staphylococcus aureus (strain Mu3 / ATCC 700698).